Consider the following 423-residue polypeptide: Glucose-1-phosphate adenylyltransferase (423 aa).

Alpha-D-glucose 1-phosphate-binding positions include Tyr-98, Gly-163, 178-179 (EK), and Ser-189.

This sequence belongs to the bacterial/plant glucose-1-phosphate adenylyltransferase family. As to quaternary structure, homotetramer.

It catalyses the reaction alpha-D-glucose 1-phosphate + ATP + H(+) = ADP-alpha-D-glucose + diphosphate. It participates in glycan biosynthesis; glycogen biosynthesis. Its function is as follows. Involved in the biosynthesis of ADP-glucose, a building block required for the elongation reactions to produce glycogen. Catalyzes the reaction between ATP and alpha-D-glucose 1-phosphate (G1P) to produce pyrophosphate and ADP-Glc. The polypeptide is Glucose-1-phosphate adenylyltransferase (Thermotoga sp. (strain RQ2)).